The following is a 554-amino-acid chain: Hydroxylamine reductase (554 aa).

[2Fe-2S] cluster-binding residues include C3, C6, C18, and C25. 8 residues coordinate hybrid [4Fe-2O-2S] cluster: H252, E276, C320, C408, C436, C461, E495, and K497. C408 carries the cysteine persulfide modification.

This sequence belongs to the HCP family. [2Fe-2S] cluster is required as a cofactor. Requires hybrid [4Fe-2O-2S] cluster as cofactor.

The protein localises to the cytoplasm. It carries out the reaction A + NH4(+) + H2O = hydroxylamine + AH2 + H(+). Catalyzes the reduction of hydroxylamine to form NH(3) and H(2)O. This is Hydroxylamine reductase from Shewanella pealeana (strain ATCC 700345 / ANG-SQ1).